Here is a 404-residue protein sequence, read N- to C-terminus: uncharacterized protein (404 aa).

Transmembrane regions (helical) follow at residues 9–29 (IYLI…PYLS), 36–56 (GFGE…FIGL), 76–96 (LVVK…LLFC), 103–123 (IMFY…QLSI), 135–155 (FIQV…LEFY), 162–182 (KRIL…YLIY), 199–219 (AFFY…SFFI), 236–256 (LGLY…ILAI), 288–308 (IVPI…LFFL), 319–339 (IIVF…VNYL), and 366–386 (LIFT…LGIL).

The protein belongs to the polysaccharide synthase family. HI_0867/HI_1700 subfamily.

It localises to the cell membrane. This is an uncharacterized protein from Haemophilus influenzae (strain ATCC 51907 / DSM 11121 / KW20 / Rd).